The chain runs to 432 residues: MSELKDCPLQFHDFKSVDHIKLCPRYTAVLSRSEDDGIGIEELDTLQLELETLLSSASRRLRVLEAETQILTDWQDKKGDRRFLKLGKEHELGTPIKHSKPKKQKLDGKVSHASGPGPGRPKSRNMQQKMQEYEFTDDPVDVPRIPKNDAPNRFWASVEPYCADITNDEIKVLEDLLKTPEDEADYYKIPPLGKHYSQRWAQEDLLEEQKDGARAALSGDKKKGILGPLAELDSKDVDSLLKKSDSQHDQPEDGCPFGHLTQRLLQALVEENIISPVEDSPIPEISGKESGTDGASTSPRSQNKPFSAPHTKSLEVRVKEELIAQGLLESDDRPADDSEDEVLAELRKRQAELKALSAHNRAKKQELLRLAKEEMNRQELRQRVRMADNEVMDAFRKIMAARQKKRTPTKKEKDQAWKALKERESILKLLDG.

Disordered stretches follow at residues 90–127 and 275–314; these read HELG…RNMQ and SPVE…TKSL. Positions 293–305 are enriched in polar residues; that stretch reads DGASTSPRSQNKP. Residues 335–398 adopt a coiled-coil conformation; sequence ADDSEDEVLA…NEVMDAFRKI (64 aa).

This sequence belongs to the NGG1 family.

It is found in the nucleus. Its function is as follows. Functions as a component of the PCAF complex. The PCAF complex is capable of efficiently acetylating histones in a nucleosomal context. In Xenopus laevis (African clawed frog), this protein is Transcriptional adapter 3-A (tada3-a).